The primary structure comprises 793 residues: DnaJ homolog subfamily C member 10 (793 aa).

The first 32 residues, 1-32 (MGVWLNKDDYIRDLKRIILCFLIVYMAILVGT), serve as a signal peptide directing secretion. The region spanning 35 to 100 (DFYSLLGVSK…DLRKKYDKYG (66 aa)) is the J domain. Residues 130–232 (EIITLERREF…ESLVSFAMQH (103 aa)) form the Thioredoxin 1 domain. Cys158 and Cys161 are joined by a disulfide. 2 trxb regions span residues 235–350 (STVT…LPDF) and 348–463 (PDFE…PQNF). Thioredoxin domains are found at residues 454-553 (HVTT…IEDL), 557-662 (SVVS…SLRI), and 671-778 (VSTD…ISEK). A disulfide bridge connects residues Cys480 and Cys483. The N-linked (GlcNAc...) asparagine glycan is linked to Asn530. 2 disulfides stabilise this stretch: Cys588-Cys591 and Cys700-Cys703. A Prevents secretion from ER motif is present at residues 790–793 (KDEL).

Interacts with EDEM1. Interacts with HSPA5 (via its J domain).

The protein localises to the endoplasmic reticulum lumen. Endoplasmic reticulum disulfide reductase involved both in the correct folding of proteins and degradation of misfolded proteins. Required for efficient folding of proteins in the endoplasmic reticulum by catalyzing the removal of non-native disulfide bonds formed during the folding of proteins, such as LDLR. Also involved in endoplasmic reticulum-associated degradation (ERAD) by reducing incorrect disulfide bonds in misfolded glycoproteins recognized by EDEM1. Interaction with HSPA5 is required its activity, not for the disulfide reductase activity, but to facilitate the release of DNAJC10 from its substrate. Promotes apoptotic signaling pathway in response to endoplasmic reticulum stress. The polypeptide is DnaJ homolog subfamily C member 10 (DNAJC10) (Homo sapiens (Human)).